We begin with the raw amino-acid sequence, 193 residues long: Imidazoleglycerol-phosphate dehydratase (193 aa).

Belongs to the imidazoleglycerol-phosphate dehydratase family.

The protein localises to the cytoplasm. The catalysed reaction is D-erythro-1-(imidazol-4-yl)glycerol 3-phosphate = 3-(imidazol-4-yl)-2-oxopropyl phosphate + H2O. It participates in amino-acid biosynthesis; L-histidine biosynthesis; L-histidine from 5-phospho-alpha-D-ribose 1-diphosphate: step 6/9. This is Imidazoleglycerol-phosphate dehydratase (hisB) from Saccharolobus solfataricus (strain ATCC 35092 / DSM 1617 / JCM 11322 / P2) (Sulfolobus solfataricus).